A 415-amino-acid polypeptide reads, in one-letter code: Alpha-1,3/1,6-mannosyltransferase ALG2 (415 aa).

Over 1–84 (MAENLYRARS…LPRSLGWGGR (84 aa)) the chain is Cytoplasmic. Residues 85-105 (GAAICSYVRMVFLALYVLFLS) constitute an intramembrane region (helical). Residues 106–415 (GEEFDVVVCD…QLYQYVTKLV (310 aa)) lie on the Cytoplasmic side of the membrane.

It belongs to the glycosyltransferase group 1 family. Glycosyltransferase 4 subfamily.

Its subcellular location is the endoplasmic reticulum membrane. It catalyses the reaction a beta-D-Man-(1-&gt;4)-beta-D-GlcNAc-(1-&gt;4)-alpha-D-GlcNAc-diphospho-di-trans,poly-cis-dolichol + GDP-alpha-D-mannose = an alpha-D-Man-(1-&gt;3)-beta-D-Man-(1-&gt;4)-beta-D-GlcNAc-(1-&gt;4)-alpha-D-GlcNAc-diphospho-di-trans,poly-cis-dolichol + GDP + H(+). It carries out the reaction an alpha-D-Man-(1-&gt;3)-beta-D-Man-(1-&gt;4)-beta-D-GlcNAc-(1-&gt;4)-alpha-D-GlcNAc-diphospho-di-trans,poly-cis-dolichol + GDP-alpha-D-mannose = an alpha-D-Man-(1-&gt;3)-[alpha-D-Man-(1-&gt;6)]-beta-D-Man-(1-&gt;4)-beta-D-GlcNAc-(1-&gt;4)-alpha-D-GlcNAc-diphospho-di-trans,poly-cis-dolichol + GDP + H(+). The catalysed reaction is a beta-D-Man-(1-&gt;4)-beta-D-GlcNAc-(1-&gt;4)-alpha-D-GlcNAc-diphospho-di-trans,poly-cis-dolichol + GDP-alpha-D-mannose = an alpha-D-Man-(1-&gt;6)-beta-D-Man-(1-&gt;4)-beta-D-GlcNAc-(1-&gt;4)-alpha-D-GlcNAc-diphospho-di-trans,poly-cis-dolichol + GDP + H(+). The enzyme catalyses an alpha-D-Man-(1-&gt;6)-beta-D-Man-(1-&gt;4)-beta-D-GlcNAc-(1-&gt;4)-alpha-D-GlcNAc-diphospho-di-trans,poly-cis-dolichol + GDP-alpha-D-mannose = an alpha-D-Man-(1-&gt;3)-[alpha-D-Man-(1-&gt;6)]-beta-D-Man-(1-&gt;4)-beta-D-GlcNAc-(1-&gt;4)-alpha-D-GlcNAc-diphospho-di-trans,poly-cis-dolichol + GDP + H(+). It functions in the pathway protein modification; protein glycosylation. Mannosyltransferase that operates in the biosynthetic pathway of dolichol-linked oligosaccharides, the glycan precursors employed in protein asparagine (N)-glycosylation. The assembly of dolichol-linked oligosaccharides begins on the cytosolic side of the endoplasmic reticulum membrane and finishes in its lumen. The sequential addition of sugars to dolichol pyrophosphate produces dolichol-linked oligosaccharides containing fourteen sugars, including two GlcNAcs, nine mannoses and three glucoses. Once assembled, the oligosaccharide is transferred from the lipid to nascent proteins by oligosaccharyltransferases. Catalyzes, on the cytoplasmic face of the endoplasmic reticulum, the addition of the second and third mannose residues to the dolichol-linked oligosaccharide chain, to produce Man3GlcNAc(2)-PP-dolichol core oligosaccharide. Man3GlcNAc(2)-PP-dolichol is a substrate for ALG11, the following enzyme in the biosynthetic pathway. While both alpha 1,3 and alpha 1,6 linkages are possible, the sequential addition of alpha 1,3 followed by alpha 1,6 is probably the preferred route. This chain is Alpha-1,3/1,6-mannosyltransferase ALG2 (Alg2), found in Mus musculus (Mouse).